The sequence spans 81 residues: uncharacterized protein (81 aa).

This is an uncharacterized protein from Bacillus anthracis.